Here is a 169-residue protein sequence, read N- to C-terminus: Phosphopantetheine adenylyltransferase (169 aa).

Threonine 9 provides a ligand contact to substrate. ATP is bound by residues 9–10 and histidine 17; that span reads TF. Substrate is bound by residues lysine 41, leucine 73, and arginine 87. ATP-binding positions include 88–90, glutamate 98, and 123–129; these read GLR and YQFISGT.

It belongs to the bacterial CoaD family. In terms of assembly, homohexamer. Requires Mg(2+) as cofactor.

It localises to the cytoplasm. The enzyme catalyses (R)-4'-phosphopantetheine + ATP + H(+) = 3'-dephospho-CoA + diphosphate. The protein operates within cofactor biosynthesis; coenzyme A biosynthesis; CoA from (R)-pantothenate: step 4/5. Functionally, reversibly transfers an adenylyl group from ATP to 4'-phosphopantetheine, yielding dephospho-CoA (dPCoA) and pyrophosphate. The sequence is that of Phosphopantetheine adenylyltransferase from Bordetella bronchiseptica (strain ATCC BAA-588 / NCTC 13252 / RB50) (Alcaligenes bronchisepticus).